The following is a 1045-amino-acid chain: DNA polymerase (1045 aa).

Positions 331-355 are disordered; it reads IKENEESDSESDNDDEEDKKENDGA. Residues 335–348 show a composition bias toward acidic residues; that stretch reads EESDSESDNDDEED.

It belongs to the DNA polymerase type-B family.

The enzyme catalyses DNA(n) + a 2'-deoxyribonucleoside 5'-triphosphate = DNA(n+1) + diphosphate. The sequence is that of DNA polymerase (dpo) from Phaeocystis pouchetii (PpV01).